Here is a 141-residue protein sequence, read N- to C-terminus: Small ribosomal subunit protein uS12 (141 aa).

Residues 1-11 (MPTISQLVTTS) are compositionally biased toward polar residues. Positions 1–22 (MPTISQLVTTSRQDKNYKSKSP) are disordered. Residue Asp102 is modified to 3-methylthioaspartic acid.

Belongs to the universal ribosomal protein uS12 family. As to quaternary structure, part of the 30S ribosomal subunit. Contacts proteins S8 and S17. May interact with IF1 in the 30S initiation complex.

In terms of biological role, with S4 and S5 plays an important role in translational accuracy. Its function is as follows. Interacts with and stabilizes bases of the 16S rRNA that are involved in tRNA selection in the A site and with the mRNA backbone. Located at the interface of the 30S and 50S subunits, it traverses the body of the 30S subunit contacting proteins on the other side and probably holding the rRNA structure together. The combined cluster of proteins S8, S12 and S17 appears to hold together the shoulder and platform of the 30S subunit. The sequence is that of Small ribosomal subunit protein uS12 from Acholeplasma laidlawii (strain PG-8A).